The chain runs to 208 residues: Thymidylate kinase (208 aa).

Residue 11-18 (GGEGVGKS) coordinates ATP.

It belongs to the thymidylate kinase family.

The enzyme catalyses dTMP + ATP = dTDP + ADP. Its function is as follows. Phosphorylation of dTMP to form dTDP in both de novo and salvage pathways of dTTP synthesis. In Methylococcus capsulatus (strain ATCC 33009 / NCIMB 11132 / Bath), this protein is Thymidylate kinase.